The primary structure comprises 316 residues: Taste receptor type 2 member 3 (316 aa).

Residues 1–6 (MMGLTE) are Extracellular-facing. The chain crosses the membrane as a helical span at residues 7–27 (GVFLILSGTQFTLGILVNCFI). Topologically, residues 28 to 42 (ELVNGSSWFKTKRMS) are cytoplasmic. A helical transmembrane segment spans residues 43–63 (LSDFIITTLALLRIILLCIIL). At 64–94 (TDSFLIEFSPNTHDSGIIMQIIDVSWTFTNH) the chain is on the extracellular side. Residues 95-115 (LSIWLATCLGVLYCLKIASFS) form a helical membrane-spanning segment. Residues 116–128 (HPTFLWLKWRVSR) are Cytoplasmic-facing. Residues 129-149 (VMVWMLLGALLLSCGSTASLI) traverse the membrane as a helical segment. Over 150–186 (NEFKLYSVFRGIEATRNVTEHFRKKRSEYYLIHVLGT) the chain is Extracellular. N-linked (GlcNAc...) asparagine glycosylation occurs at Asn166. Residues 187–207 (LWYLPPLIVSLASYSLLIFSL) traverse the membrane as a helical segment. At 208–234 (GRHTRQMLQNGTSSRDPTTEAHKRAIR) the chain is on the cytoplasmic side. The helical transmembrane segment at 235 to 255 (IILSFFFLFLLYFLAFLIASF) threads the bilayer. Over 256-266 (GNFLPKTKMAK) the chain is Extracellular. The helical transmembrane segment at 267–287 (MIGEVMTMFYPAGHSFILILG) threads the bilayer. Topologically, residues 288–316 (NSKLKQTFVVMLRCESGHLKPGSKGPIFS) are cytoplasmic.

It belongs to the G-protein coupled receptor T2R family. In terms of tissue distribution, expressed in subsets of taste receptor cells of the tongue and palate epithelium and exclusively in gustducin-positive cells. Expressed in the antrum and fundus (part of the stomach), duodenum and in gastric endocrine cells.

Its subcellular location is the membrane. Functionally, gustducin-coupled receptor implicated in the perception of bitter compounds in the oral cavity and the gastrointestinal tract. Signals through PLCB2 and the calcium-regulated cation channel TRPM5. The chain is Taste receptor type 2 member 3 (TAS2R3) from Homo sapiens (Human).